The following is a 218-amino-acid chain: Protein GrpE (218 aa).

Positions 1 to 21 (MSDKQREAERQQSEDKAHSEA) are enriched in basic and acidic residues. A disordered region spans residues 1-66 (MSDKQREAER…LEEARARAEE (66 aa)). Low complexity predominate over residues 24-36 (AEAGQAPEAQAAE).

Belongs to the GrpE family. As to quaternary structure, homodimer.

The protein localises to the cytoplasm. Its function is as follows. Participates actively in the response to hyperosmotic and heat shock by preventing the aggregation of stress-denatured proteins, in association with DnaK and GrpE. It is the nucleotide exchange factor for DnaK and may function as a thermosensor. Unfolded proteins bind initially to DnaJ; upon interaction with the DnaJ-bound protein, DnaK hydrolyzes its bound ATP, resulting in the formation of a stable complex. GrpE releases ADP from DnaK; ATP binding to DnaK triggers the release of the substrate protein, thus completing the reaction cycle. Several rounds of ATP-dependent interactions between DnaJ, DnaK and GrpE are required for fully efficient folding. The chain is Protein GrpE from Alkalilimnicola ehrlichii (strain ATCC BAA-1101 / DSM 17681 / MLHE-1).